Reading from the N-terminus, the 783-residue chain is Polyribonucleotide nucleotidyltransferase 1, mitochondrial (783 aa).

The N-terminal 45 residues, 1–45, are a transit peptide targeting the mitochondrion; it reads MAACRLCCLCPCLRPLGCGPLGRPGRNRALSYLQMRALWSSTGSR. Residues Lys250, Lys264, and Lys285 each carry the N6-acetyllysine modification. Lys552 carries the post-translational modification N6-succinyllysine. Residues 605-664 form the KH domain; that stretch reads PVVETVKVPLSKRAKFVGPGGYHLKKLQAETGVTISQVDEETFSIFAPTPTAMHEARDFI. The region spanning 679-750 is the S1 motif domain; that stretch reads GAVYTATITE…ADGRMRLSRK (72 aa). Ser754 is subject to Phosphoserine.

It belongs to the polyribonucleotide nucleotidyltransferase family. In terms of assembly, homotrimer; in free form. Homooligomer. Component of the mitochondrial degradosome (mtEXO) complex which is a heteropentamer containing 2 copies of SUPV3L1 and 3 copies of PNPT1. As part of the mitochondrial degradosome complex, interacts with GRSF1 in an RNA-dependent manner; the interaction enhances the activity of the complex. Interacts with TCL1A; the interaction has no effect on PNPT1 exonuclease activity.

The protein localises to the cytoplasm. It is found in the mitochondrion matrix. The protein resides in the mitochondrion intermembrane space. The enzyme catalyses RNA(n+1) + phosphate = RNA(n) + a ribonucleoside 5'-diphosphate. In terms of biological role, RNA-binding protein implicated in numerous RNA metabolic processes. Catalyzes the phosphorolysis of single-stranded polyribonucleotides processively in the 3'-to-5' direction. Mitochondrial intermembrane factor with RNA-processing exoribonulease activity. Component of the mitochondrial degradosome (mtEXO) complex, that degrades 3' overhang double-stranded RNA with a 3'-to-5' directionality in an ATP-dependent manner. Involved in the degradation of non-coding mitochondrial transcripts (MT-ncRNA) and tRNA-like molecules. Required for correct processing and polyadenylation of mitochondrial mRNAs. Plays a role as a cytoplasmic RNA import factor that mediates the translocation of small RNA components, like the 5S RNA, the RNA subunit of ribonuclease P and the mitochondrial RNA-processing (MRP) RNA, into the mitochondrial matrix. Plays a role in mitochondrial morphogenesis and respiration; regulates the expression of the electron transport chain (ETC) components at the mRNA and protein levels. In the cytoplasm, shows a 3'-to-5' exoribonuclease mediating mRNA degradation activity; degrades c-myc mRNA upon treatment with IFNB1/IFN-beta, resulting in a growth arrest in melanoma cells. Regulates the stability of specific mature miRNAs in melanoma cells; specifically and selectively degrades miR-221, preferentially. Also plays a role in RNA cell surveillance by cleaning up oxidized RNAs. Binds to the RNA subunit of ribonuclease P, MRP RNA and miR-221 microRNA. The protein is Polyribonucleotide nucleotidyltransferase 1, mitochondrial (Pnpt1) of Mus musculus (Mouse).